The chain runs to 155 residues: Small ribosomal subunit protein uS7c (155 aa).

The protein belongs to the universal ribosomal protein uS7 family. As to quaternary structure, part of the 30S ribosomal subunit.

It is found in the plastid. The protein resides in the chloroplast. In terms of biological role, one of the primary rRNA binding proteins, it binds directly to 16S rRNA where it nucleates assembly of the head domain of the 30S subunit. This is Small ribosomal subunit protein uS7c (rps7) from Typha angustifolia (Narrow leaf cattail).